The sequence spans 195 residues: Shikimate kinase (195 aa).

30–35 serves as a coordination point for ATP; that stretch reads GAGKTA. Position 34 (threonine 34) interacts with Mg(2+). Substrate contacts are provided by aspartate 52, arginine 76, and glycine 98. Residue arginine 136 participates in ATP binding. Arginine 155 is a substrate binding site.

The protein belongs to the shikimate kinase family. Monomer. The cofactor is Mg(2+).

The protein localises to the cytoplasm. It catalyses the reaction shikimate + ATP = 3-phosphoshikimate + ADP + H(+). It functions in the pathway metabolic intermediate biosynthesis; chorismate biosynthesis; chorismate from D-erythrose 4-phosphate and phosphoenolpyruvate: step 5/7. In terms of biological role, catalyzes the specific phosphorylation of the 3-hydroxyl group of shikimic acid using ATP as a cosubstrate. The polypeptide is Shikimate kinase (Ruegeria pomeroyi (strain ATCC 700808 / DSM 15171 / DSS-3) (Silicibacter pomeroyi)).